Here is a 362-residue protein sequence, read N- to C-terminus: MTQPIRDSLGRPLRDLRISVTDRCNMRCRYCMPREIFGPNFTFLPRSELLTFEEITRIAAAFIRAGVRKIRLTGGEPLLRADLPRLVAMLADLPDVHDLALTTNGSLLARYARPLRDAGLRRVTVSLDTLNPATFSRLADTDIPLDNVLAGIDAAQSAGFFPIKLNAVIRRGVNDGDVEELAAFARDNGHIMRFIEYMDVGNSNGWRAADVVPAAEIIARISSHWPIDPLPPRYPGEVANRFRYRDGRGEFGVIASITQPFCRDCTRLRLSAVGEVFTCLFAVRGHDLRSIVRSNTDSAAIDAALDEAITRIWSRRSDRYSELRALDSDGSREDADESEASAVPGRSTHPGHRKVEMSYIGG.

One can recognise a Radical SAM core domain in the interval 8–228 (SLGRPLRDLR…ARISSHWPID (221 aa)). Arginine 17 provides a ligand contact to GTP. [4Fe-4S] cluster-binding residues include cysteine 24 and cysteine 28. Tyrosine 30 contacts S-adenosyl-L-methionine. Residue cysteine 31 participates in [4Fe-4S] cluster binding. Arginine 71 serves as a coordination point for GTP. Glycine 75 is an S-adenosyl-L-methionine binding site. Threonine 102 contacts GTP. Position 126 (serine 126) interacts with S-adenosyl-L-methionine. Position 164 (lysine 164) interacts with GTP. S-adenosyl-L-methionine is bound at residue methionine 198. The [4Fe-4S] cluster site is built by cysteine 262 and cysteine 265. GTP is bound at residue 267–269 (RLR). Position 279 (cysteine 279) interacts with [4Fe-4S] cluster. Positions 325–362 (ALDSDGSREDADESEASAVPGRSTHPGHRKVEMSYIGG) are disordered.

The protein belongs to the radical SAM superfamily. MoaA family. As to quaternary structure, monomer and homodimer. [4Fe-4S] cluster serves as cofactor.

It catalyses the reaction GTP + AH2 + S-adenosyl-L-methionine = (8S)-3',8-cyclo-7,8-dihydroguanosine 5'-triphosphate + 5'-deoxyadenosine + L-methionine + A + H(+). It functions in the pathway cofactor biosynthesis; molybdopterin biosynthesis. Its function is as follows. Catalyzes the cyclization of GTP to (8S)-3',8-cyclo-7,8-dihydroguanosine 5'-triphosphate. This chain is GTP 3',8-cyclase, found in Acidothermus cellulolyticus (strain ATCC 43068 / DSM 8971 / 11B).